The primary structure comprises 316 residues: 1-aminocyclopropane-1-carboxylate oxidase 4 (316 aa).

Residues 153-253 (PNFGTKVSNY…RMSLASFYNP (101 aa)) form the Fe2OG dioxygenase domain. Fe cation contacts are provided by His-177, Asp-179, and His-234.

This sequence belongs to the iron/ascorbate-dependent oxidoreductase family. The cofactor is Fe cation. In terms of tissue distribution, expressed in all of the floral organs examined apart from the sepals.

The enzyme catalyses 1-aminocyclopropane-1-carboxylate + L-ascorbate + O2 = ethene + L-dehydroascorbate + hydrogen cyanide + CO2 + 2 H2O. It participates in alkene biosynthesis; ethylene biosynthesis via S-adenosyl-L-methionine; ethylene from S-adenosyl-L-methionine: step 2/2. The protein is 1-aminocyclopropane-1-carboxylate oxidase 4 (ACO4) of Solanum lycopersicum (Tomato).